A 90-amino-acid chain; its full sequence is Cytochrome c oxidase assembly protein COX19 (90 aa).

Residues 1–12 are compositionally biased toward polar residues; the sequence is MSTAMNFGTKSF. The interval 1–20 is disordered; sequence MSTAMNFGTKSFQPRPPDKG. An N-acetylserine modification is found at S2. The CHCH domain occupies 27 to 69; that stretch reads LGECKSFKEKFMKCLHNNNFENALCRKESKEYLECRMERKLML. Short sequence motifs (cx9C motif) lie at residues 30–40 and 51–61; these read CKSFKEKFMKC and CRKESKEYLEC. Intrachain disulfides connect C30–C61 and C40–C51.

The protein belongs to the COX19 family. In terms of assembly, interacts with CHCHD4/MIA40 forming transient intermolecular disulfide bridges. Ubiquitously expressed. Highly expressed in skeletal muscle.

Its subcellular location is the cytoplasm. It is found in the cytosol. It localises to the mitochondrion intermembrane space. The protein localises to the mitochondrion. Functionally, required for the transduction of an SCO1-dependent redox signal from the mitochondrion to ATP7A to regulate cellular copper homeostasis. May be required for the assembly of mitochondrial cytochrome c oxidase. The protein is Cytochrome c oxidase assembly protein COX19 (COX19) of Homo sapiens (Human).